Reading from the N-terminus, the 587-residue chain is Arginine--tRNA ligase (587 aa).

The short motif at 127–137 (PNLAKEMHVGH) is the 'HIGH' region element.

This sequence belongs to the class-I aminoacyl-tRNA synthetase family. In terms of assembly, monomer.

It is found in the cytoplasm. It carries out the reaction tRNA(Arg) + L-arginine + ATP = L-arginyl-tRNA(Arg) + AMP + diphosphate. This Pseudomonas aeruginosa (strain ATCC 15692 / DSM 22644 / CIP 104116 / JCM 14847 / LMG 12228 / 1C / PRS 101 / PAO1) protein is Arginine--tRNA ligase.